The chain runs to 255 residues: Thiazole synthase (255 aa).

Lys97 (schiff-base intermediate with DXP) is an active-site residue. 1-deoxy-D-xylulose 5-phosphate is bound by residues Gly158, 184 to 185, and 206 to 207; these read AG and NT.

Belongs to the ThiG family. In terms of assembly, homotetramer. Forms heterodimers with either ThiH or ThiS.

Its subcellular location is the cytoplasm. It carries out the reaction [ThiS sulfur-carrier protein]-C-terminal-Gly-aminoethanethioate + 2-iminoacetate + 1-deoxy-D-xylulose 5-phosphate = [ThiS sulfur-carrier protein]-C-terminal Gly-Gly + 2-[(2R,5Z)-2-carboxy-4-methylthiazol-5(2H)-ylidene]ethyl phosphate + 2 H2O + H(+). Its pathway is cofactor biosynthesis; thiamine diphosphate biosynthesis. In terms of biological role, catalyzes the rearrangement of 1-deoxy-D-xylulose 5-phosphate (DXP) to produce the thiazole phosphate moiety of thiamine. Sulfur is provided by the thiocarboxylate moiety of the carrier protein ThiS. In vitro, sulfur can be provided by H(2)S. In Acetivibrio thermocellus (strain ATCC 27405 / DSM 1237 / JCM 9322 / NBRC 103400 / NCIMB 10682 / NRRL B-4536 / VPI 7372) (Clostridium thermocellum), this protein is Thiazole synthase.